We begin with the raw amino-acid sequence, 329 residues long: Porphobilinogen deaminase (329 aa).

C250 bears the S-(dipyrrolylmethanemethyl)cysteine mark.

It belongs to the HMBS family. As to quaternary structure, monomer. It depends on dipyrromethane as a cofactor.

The enzyme catalyses 4 porphobilinogen + H2O = hydroxymethylbilane + 4 NH4(+). Its pathway is porphyrin-containing compound metabolism; protoporphyrin-IX biosynthesis; coproporphyrinogen-III from 5-aminolevulinate: step 2/4. Its function is as follows. Tetrapolymerization of the monopyrrole PBG into the hydroxymethylbilane pre-uroporphyrinogen in several discrete steps. The protein is Porphobilinogen deaminase of Burkholderia mallei (strain NCTC 10247).